Reading from the N-terminus, the 257-residue chain is MSLAKRIIPCLDVDNGRVVKGVQFVDIRDAGDPVEVAKRYDEQGADEITFLDITATAHERDTIVHVVEEVASQVFIPLTVGGGIRSIEDVRTMLNAGADKVAINSAAIFNPAFVKEACDTFGSQCIVVAIDAKKVSPKGEPDKWEIFTHGGRKETGIDAVEWAKEMETLGAGELLVTSMDKDGTKSGFDLALTRTISDSVKIPVIASGGVGKLSDLCDGITQGHAEAVLAASIFHFGEHTVQEAKQAMQKEGIEVRL.

Catalysis depends on residues Asp-12 and Asp-131.

This sequence belongs to the HisA/HisF family. As to quaternary structure, heterodimer of HisH and HisF.

The protein localises to the cytoplasm. It catalyses the reaction 5-[(5-phospho-1-deoxy-D-ribulos-1-ylimino)methylamino]-1-(5-phospho-beta-D-ribosyl)imidazole-4-carboxamide + L-glutamine = D-erythro-1-(imidazol-4-yl)glycerol 3-phosphate + 5-amino-1-(5-phospho-beta-D-ribosyl)imidazole-4-carboxamide + L-glutamate + H(+). It functions in the pathway amino-acid biosynthesis; L-histidine biosynthesis; L-histidine from 5-phospho-alpha-D-ribose 1-diphosphate: step 5/9. Functionally, IGPS catalyzes the conversion of PRFAR and glutamine to IGP, AICAR and glutamate. The HisF subunit catalyzes the cyclization activity that produces IGP and AICAR from PRFAR using the ammonia provided by the HisH subunit. This Hydrogenovibrio crunogenus (strain DSM 25203 / XCL-2) (Thiomicrospira crunogena) protein is Imidazole glycerol phosphate synthase subunit HisF.